The sequence spans 193 residues: MKNSSIVLASASPRRSELLESAGIQFRVVPADINEEPLPGEEPVDHVQRLAEGKARAAAELAEGRFFLGADTIVLCDGEIMGKPKDAVDAERMLKKLSGVPHEVVTGFAIYDRERKGAVVEAVRTKVFFKHLRDEEIRDYVATGCPFDKAGAYAIQGGAAHMVRKIEGSYTNVVGLPLCEVVDALRVIGALGN.

D71 serves as the catalytic Proton acceptor.

This sequence belongs to the Maf family. YhdE subfamily. The cofactor is a divalent metal cation.

Its subcellular location is the cytoplasm. It catalyses the reaction dTTP + H2O = dTMP + diphosphate + H(+). It carries out the reaction UTP + H2O = UMP + diphosphate + H(+). Nucleoside triphosphate pyrophosphatase that hydrolyzes dTTP and UTP. May have a dual role in cell division arrest and in preventing the incorporation of modified nucleotides into cellular nucleic acids. The chain is dTTP/UTP pyrophosphatase from Geobacter sp. (strain M21).